We begin with the raw amino-acid sequence, 103 residues long: Small ribosomal subunit protein uS10 (103 aa).

This sequence belongs to the universal ribosomal protein uS10 family. As to quaternary structure, part of the 30S ribosomal subunit.

Involved in the binding of tRNA to the ribosomes. The chain is Small ribosomal subunit protein uS10 from Shewanella baltica (strain OS223).